The sequence spans 522 residues: Insulinoma-associated protein 1 (522 aa).

Residues 1-12 are compositionally biased toward basic residues; it reads MPRGFLVKRSKK. The tract at residues 1 to 20 is SNAG domain; sequence MPRGFLVKRSKKSTPVSYRI. 2 disordered regions span residues 1–112 and 182–235; these read MPRG…SREH and AAEA…KPKA. The segment at 2-7 is required and sufficient for interaction with KDM1A; that stretch reads PRGFLV. Residues 43–57 form a necessary for interaction with CCND1 region; that stretch reads PPAPGPGPVPGPLQP. The segment covering 43–61 has biased composition (pro residues); it reads PPAPGPGPVPGPLQPPPPT. Low complexity-rich tracts occupy residues 66-75 and 212-228; these read AALAAALACA and ASAA…AKAP. Residues 277–297 form a C2H2-type 1; atypical zinc finger; sequence FICQLCKEEYADPFALAQHKC. A C2H2-type 2 zinc finger spans residues 305 to 327; the sequence is YRCPECAKVFSCPANLASHRRWH. The disordered stretch occupies residues 325 to 373; it reads RWHKPRPAPAAARACEPETPARAEAREATGGGGSDRDTPSPGGVSESGS. The span at 339-351 shows a compositional bias: basic and acidic residues; that stretch reads CEPETPARAEARE. C2H2-type zinc fingers lie at residues 378–400, 453–476, and 481–504; these read YECH…LLAH, HLCP…RLLH, and FPCK…NKCH.

This sequence belongs to the INSM1 family. In terms of assembly, interacts (via the N-terminal region) with CCND1 (via cyclin N-terminal domain); the interaction competes with the binding of CCND1 to CDK4 during cell cycle progression and increases its transcriptional repressor activity. Interacts with HDAC3; the interaction increases its transcriptional repressor activity. Interacts (via the SNAG domain) with HDAC1. Interacts (via the SNAG domain) with HDAC2. Interacts (via the SNAG domain) with KDM1A. Interacts (via the SNAG domain) with RCOR1. Interacts with SORBS1.

The protein resides in the nucleus. Functionally, sequence-specific DNA-binding transcriptional regulator that plays a key role in neurogenesis and neuroendocrine cell differentiation during embryonic and/or fetal development. Binds to the consensus sequence 5'-[TG][TC][TC][TT][GA]GGG[CG]A-3' in target promoters. Acts as a transcriptional repressor of NEUROD1 and INS expression via its interaction with cyclin CCND1 in a cell cycle-independent manner. Negatively regulates skeletal muscle-specific gene expression in endocrine cells of the pituitary by inhibiting the Notch signaling pathway. Represses target gene transcription by recruiting chromatin-modifying factors, such as HDAC1, HDAC2, HDAC3, KDM1A and RCOR1 histone deacetylases. Binds to its own promoter, suggesting autoregulation as a self-control feedback mechanism. Competes with histone H3 for the same binding site on the histone demethylase complex formed by KDM1A and RCOR1, and thereby inhibits demethylation of histone H3 at 'Lys-4'. Promotes the generation and expansion of neuronal basal progenitor cells in the developing neocortex. Involved in the differentiation of endocrine cells of the developing anterior pituitary gland, of the pancreas and intestine, and of sympatho-adrenal cells in the peripheral nervous system. Promotes cell cycle signaling arrest and inhibition of cellular proliferation. The protein is Insulinoma-associated protein 1 (INSM1) of Bos taurus (Bovine).